A 728-amino-acid polypeptide reads, in one-letter code: Lutropin-choriogonadotropic hormone receptor (728 aa).

Residues 1–19 (MLPALLPLLLPALLPGAGG) form the signal peptide. Residues 20–389 (GRCPQRCACT…DILGYSFLRV (370 aa)) are Extracellular-facing. LRR repeat units follow at residues 92-116 (LPALSEILILNTKNLLHIEDGAFRN), 117-142 (LPRLKYLSICNTGIIEFPDLTQIFSS), 144-166 (AHFILELCDNLRMTTIPQNAFQG), 168-191 (SNESLTLKLYKNGFEDIHSHAFNG), 193-215 (KLNQLILKDNKNLRRIHNDALRG), and 216-239 (ATGPDVLDISSTALESLPSYGLEA). The helical transmembrane segment at 390 to 410 (LIWFINILALAGNFIVLLVLI) threads the bilayer. Topologically, residues 411 to 420 (TSHYKLTVPR) are cytoplasmic. A helical transmembrane segment spans residues 421-441 (FLMCNLSFADFCMGLYLLLIA). At 442-466 (SVDAQTSGQYYNHAIDWQTGSGCST) the chain is on the extracellular side. Cys464 and Cys539 are joined by a disulfide. The chain crosses the membrane as a helical span at residues 467 to 487 (AGFFTVFASELSVYTLTVITI). At 488–507 (ERWHTITYAMQLDRKLRLRH) the chain is on the cytoplasmic side. A helical transmembrane segment spans residues 508 to 528 (AVPIMLGGWVFSILIAVLPLL). Residues 529-551 (GVSSYMKVSICLPMDIETGLSQA) lie on the Extracellular side of the membrane. The chain crosses the membrane as a helical span at residues 552 to 572 (YILLILMLNVIAFLVICACYI). Residues 573-595 (KIYVAVQNPELVAANKDTKIAKR) are Cytoplasmic-facing. Residues 596-616 (MAILIFTDFTCMAPISFFAIS) form a helical membrane-spanning segment. Residues 617-630 (AAIKVPLITVTNSK) are Extracellular-facing. Residues 631–651 (ILLVLFYPVNSCANPFLYAIF) form a helical membrane-spanning segment. Residues 652–728 (TKAFQRDFFL…STKKSQPECQ (77 aa)) lie on the Cytoplasmic side of the membrane.

This sequence belongs to the G-protein coupled receptor 1 family. FSH/LSH/TSH subfamily. In terms of tissue distribution, expressed in ovarian follicle granulosa cells. Expressed in ovarian follicle theca cells.

It is found in the cell membrane. Receptor for lutropin-choriogonadotropic hormone. The activity of this receptor is mediated by G proteins which activate adenylate cyclase. This chain is Lutropin-choriogonadotropic hormone receptor, found in Gallus gallus (Chicken).